Here is a 386-residue protein sequence, read N- to C-terminus: MVNLNTIPPKNGRDYYIALGLEGSANKLGVGIVKHPLLPKHANSDLSYDCEAEMLSNIRDTYVTPPGEGFLPRDTARHHRNWCIRLIKQALAEADIKSPTLDIDVICFTKGPGMGAPLHSVVIAARTCSLLWDVPLVGVNHCIGHIEMGREITKAQNPVVLYVSGGNTQVIAYSEKRYRIFGETLDIAIGNCLDRFARTLKIPNEPSPGYNIEQLAKKAPHKENLVELPYTVKGMDLSMSGILASIDLLAKDLFKGNKKNKILFDKTTGEQKVTVEDLCYSLQENLFAMLVEITERAMAHVNSNQVLIVGGVGCNVRLQEMMAQMCKDRANGQVHATDNRFCIDNGVMIAQAGLLEYRMGGIVKDFSETVVTQKFRTDEVYAAWRD.

Residues His141, His145, and Tyr162 each coordinate a divalent metal cation. Substrate-binding positions include 162–166 (YVSGG), Asp194, Gly209, Glu213, and Asn315. Asp344 lines the a divalent metal cation pocket.

This sequence belongs to the KAE1 / TsaD family. In terms of assembly, component of the EKC/KEOPS complex composed of at least BUD32, CGI121, GON7, KAE1 and PCC1; the whole complex dimerizes. It depends on a divalent metal cation as a cofactor.

Its subcellular location is the cytoplasm. It localises to the nucleus. The enzyme catalyses L-threonylcarbamoyladenylate + adenosine(37) in tRNA = N(6)-L-threonylcarbamoyladenosine(37) in tRNA + AMP + H(+). Its function is as follows. Component of the EKC/KEOPS complex that is required for the formation of a threonylcarbamoyl group on adenosine at position 37 (t(6)A37) in tRNAs that read codons beginning with adenine. The complex is probably involved in the transfer of the threonylcarbamoyl moiety of threonylcarbamoyl-AMP (TC-AMP) to the N6 group of A37. KAE1 likely plays a direct catalytic role in this reaction, but requires other protein(s) of the complex to fulfill this activity. The EKC/KEOPS complex also promotes both telomere uncapping and telomere elongation. The complex is required for efficient recruitment of transcriptional coactivators. The polypeptide is tRNA N6-adenosine threonylcarbamoyltransferase (Saccharomyces cerevisiae (strain ATCC 204508 / S288c) (Baker's yeast)).